The primary structure comprises 369 residues: Ubiquinone biosynthesis protein COQ4, mitochondrial (369 aa).

The transit peptide at Met1–Leu28 directs the protein to the mitochondrion. The interval Met1–Arg70 is disordered. Composition is skewed to polar residues over residues Arg19–Thr33 and Tyr47–Ser66. Residues His198, Asp199, His202, and Glu214 each coordinate Zn(2+). The tract at residues Phe330–Asn369 is disordered. Basic residues predominate over residues Gly332 to Trp343.

Belongs to the COQ4 family. In terms of assembly, component of a multi-subunit COQ enzyme complex, composed of at least COQ3, COQ4, COQ5, COQ6, COQ7 and COQ9. The cofactor is Zn(2+).

It is found in the mitochondrion inner membrane. It carries out the reaction a 4-hydroxy-3-methoxy-5-(all-trans-polyprenyl)benzoate + H(+) = a 2-methoxy-6-(all-trans-polyprenyl)phenol + CO2. The protein operates within cofactor biosynthesis; ubiquinone biosynthesis. Functionally, lyase that catalyzes the C1-decarboxylation of 4-hydroxy-3-methoxy-5-(all-trans-polyprenyl)benzoic acid into 2-methoxy-6-(all-trans-polyprenyl)phenol during ubiquinone biosynthesis. The protein is Ubiquinone biosynthesis protein COQ4, mitochondrial of Mycosarcoma maydis (Corn smut fungus).